A 1045-amino-acid chain; its full sequence is DNA polymerase (1045 aa).

The tract at residues 331-355 (IKENEESDSESDNDDEEDKKENDGA) is disordered. Residues 335-348 (EESDSESDNDDEED) show a composition bias toward acidic residues.

It belongs to the DNA polymerase type-B family.

The catalysed reaction is DNA(n) + a 2'-deoxyribonucleoside 5'-triphosphate = DNA(n+1) + diphosphate. This chain is DNA polymerase (dpo), found in Phaeocystis pouchetii (PpV01).